Consider the following 231-residue polypeptide: LexA repressor (231 aa).

A DNA-binding region (H-T-H motif) is located at residues 26–46; sequence FEEMKEALDLKSKSGIHRLIG. Residues S152 and K190 each act as for autocatalytic cleavage activity in the active site.

This sequence belongs to the peptidase S24 family. In terms of assembly, homodimer.

The enzyme catalyses Hydrolysis of Ala-|-Gly bond in repressor LexA.. Functionally, represses a number of genes involved in the response to DNA damage (SOS response), including recA and lexA. In the presence of single-stranded DNA, RecA interacts with LexA causing an autocatalytic cleavage which disrupts the DNA-binding part of LexA, leading to derepression of the SOS regulon and eventually DNA repair. This is LexA repressor from Acidiphilium cryptum (strain JF-5).